The sequence spans 913 residues: Calcium-activated chloride channel regulator 1 (913 aa).

Residues 1-21 (MGSFKSSVFILVLHLLEGALS) form the signal peptide. The interval 46–199 (DETLIQQIKD…DIAGKNVVNH (154 aa)) is metalloprotease domain. A Zn(2+)-binding site is contributed by histidine 156. Glutamate 157 is an active-site residue. Zn(2+) contacts are provided by histidine 160 and asparagine 167. The region spanning 306 to 475 (IVCLVLDKSG…NGLIDAFGAL (170 aa)) is the VWFA domain. N-linked (GlcNAc...) asparagine glycans are attached at residues asparagine 503, asparagine 514, asparagine 770, asparagine 804, asparagine 810, asparagine 836, and asparagine 885.

It belongs to the CLCR family. Post-translationally, glycosylated. The translation product is autoproteolytically cleaved by the metalloprotease domain in the endoplasmic reticulum into a N-terminal and a C-terminal products that remain physically associated with each other. The cleavage is necessary for calcium-activated chloride channel (CaCC) activation activity. As to expression, expressed in mucin-producing cells in the respiratory and intestinal tracts, cutaneous sweat glands, and renal mucous glands (at protein level). Strong overexpression in the airways of horses with recurrent airway obstruction (at protein level).

The protein localises to the secreted. It is found in the extracellular space. Functionally, may be involved in mediating calcium-activated chloride conductance. May play critical roles in goblet cell metaplasia, mucus hypersecretion, cystic fibrosis and AHR. May be involved in the regulation of mucus production and/or secretion by goblet cells. Involved in the regulation of tissue inflammation in the innate immune response. May play a role as a tumor suppressor. Induces MUC5AC. In Equus caballus (Horse), this protein is Calcium-activated chloride channel regulator 1 (CLCA1).